The following is a 597-amino-acid chain: Elongation factor 4 (597 aa).

A tr-type G domain is found at 2-184 (KHIRNFSIIA…EIVARIPAPV (183 aa)). GTP-binding positions include 14 to 19 (DHGKST) and 131 to 134 (NKID).

Belongs to the TRAFAC class translation factor GTPase superfamily. Classic translation factor GTPase family. LepA subfamily.

It is found in the cell inner membrane. It carries out the reaction GTP + H2O = GDP + phosphate + H(+). Required for accurate and efficient protein synthesis under certain stress conditions. May act as a fidelity factor of the translation reaction, by catalyzing a one-codon backward translocation of tRNAs on improperly translocated ribosomes. Back-translocation proceeds from a post-translocation (POST) complex to a pre-translocation (PRE) complex, thus giving elongation factor G a second chance to translocate the tRNAs correctly. Binds to ribosomes in a GTP-dependent manner. In Aeromonas salmonicida (strain A449), this protein is Elongation factor 4.